Reading from the N-terminus, the 259-residue chain is Global transcriptional regulator CodY (259 aa).

Positions M1–L155 are GAF domain. Positions A203–R222 form a DNA-binding region, H-T-H motif. Residue S215 is modified to Phosphoserine.

The protein belongs to the CodY family.

Its subcellular location is the cytoplasm. In terms of biological role, DNA-binding global transcriptional regulator which is involved in the adaptive response to starvation and acts by directly or indirectly controlling the expression of numerous genes in response to nutrient availability. During rapid exponential growth, CodY is highly active and represses genes whose products allow adaptation to nutrient depletion. This Geobacillus sp. (strain WCH70) protein is Global transcriptional regulator CodY.